A 160-amino-acid chain; its full sequence is uncharacterized protein (160 aa).

The signal sequence occupies residues 1 to 25 (MKVTLLLLLIAVLLLLLIFMKVCKQ).

This is an uncharacterized protein from Invertebrate iridescent virus 6 (IIV-6).